A 67-amino-acid polypeptide reads, in one-letter code: Probable Sec-independent protein translocase protein TatE (67 aa).

A helical membrane pass occupies residues 1–21; the sequence is MEGISLAKLLIVGALIVLLFG. A disordered region spans residues 43 to 67; the sequence is MNDDSDATSKTASEDKNAGQAVHKE. A compositionally biased stretch (basic and acidic residues) spans 54–67; it reads ASEDKNAGQAVHKE.

This sequence belongs to the TatA/E family. TatE subfamily.

The protein resides in the cell inner membrane. Its function is as follows. Part of the twin-arginine translocation (Tat) system that transports large folded proteins containing a characteristic twin-arginine motif in their signal peptide across membranes. TatE shares overlapping functions with TatA. The polypeptide is Probable Sec-independent protein translocase protein TatE (Erwinia tasmaniensis (strain DSM 17950 / CFBP 7177 / CIP 109463 / NCPPB 4357 / Et1/99)).